The sequence spans 236 residues: Small ribosomal subunit protein uS3 (236 aa).

Residues 39 to 107 (IREILHKELK…DVVINIVEIR (69 aa)) enclose the KH type-2 domain. Residues 213 to 236 (MAQDKRMNEGGGESPSPRSRRDAA) are disordered.

The protein belongs to the universal ribosomal protein uS3 family. Part of the 30S ribosomal subunit. Forms a tight complex with proteins S10 and S14.

Functionally, binds the lower part of the 30S subunit head. Binds mRNA in the 70S ribosome, positioning it for translation. This is Small ribosomal subunit protein uS3 from Bradyrhizobium sp. (strain ORS 278).